We begin with the raw amino-acid sequence, 100 residues long: Acylphosphatase (100 aa).

An Acylphosphatase-like domain is found at 14–100; sequence RWRFFVEGKV…TGADWFEIRS (87 aa). Catalysis depends on residues Arg29 and Asn47.

This sequence belongs to the acylphosphatase family.

It catalyses the reaction an acyl phosphate + H2O = a carboxylate + phosphate + H(+). In Synechococcus sp. (strain WH7803), this protein is Acylphosphatase (acyP).